The chain runs to 740 residues: Ion-translocating oxidoreductase complex subunit C (740 aa).

4Fe-4S ferredoxin-type domains follow at residues 369–397 and 407–436; these read GEPQEEQSCIRCSACADACPADLLPQQLY and KATTHNIADCIECGACAWVCPSNIPLVQYF. Residues Cys-377, Cys-380, Cys-383, Cys-387, Cys-416, Cys-419, Cys-422, and Cys-426 each coordinate [4Fe-4S] cluster. The segment at 602–716 is disordered; it reads KLEQQQANAE…EPEEQVDPRK (115 aa).

This sequence belongs to the 4Fe4S bacterial-type ferredoxin family. RnfC subfamily. In terms of assembly, the complex is composed of six subunits: RsxA, RsxB, RsxC, RsxD, RsxE and RsxG. The cofactor is [4Fe-4S] cluster.

The protein localises to the cell inner membrane. Its function is as follows. Part of a membrane-bound complex that couples electron transfer with translocation of ions across the membrane. Required to maintain the reduced state of SoxR. The sequence is that of Ion-translocating oxidoreductase complex subunit C from Escherichia coli O139:H28 (strain E24377A / ETEC).